The following is a 362-amino-acid chain: HLA class I histocompatibility antigen, B alpha chain (362 aa).

Positions 1–24 (MLVMAPRTVLLLLSAALALTETWA) are cleaved as a signal peptide. The tract at residues 3–11 (VMAPRTVLL) is VL9 epitope. The segment at 25–114 (GSHSMRYFYT…LRGYYNQSEA (90 aa)) is alpha-1. Over 25 to 309 (GSHSMRYFYT…PSSQSTVPIV (285 aa)) the chain is Extracellular. Residue N87 coordinates a peptide antigen. The Bw6 motif motif lies at 101-107 (SLRNLRG). Y108 is an a peptide antigen binding site. A glycan (N-linked (GlcNAc...) asparagine) is linked at N110. The interval 115 to 206 (GSHTLQSMYG…ENGKDKLERA (92 aa)) is alpha-2. A disulfide bridge links C125 with C188. T167, K170, E176, Y183, and Y195 together coordinate a peptide antigen. The tract at residues 207 to 298 (DPPKTHVTHH…GLPKPLTLRW (92 aa)) is alpha-3. The Ig-like C1-type domain maps to 209 to 295 (PKTHVTHHPI…QHEGLPKPLT (87 aa)). C227 and C283 are joined by a disulfide. Residues 299–309 (EPSSQSTVPIV) form a connecting peptide region. A helical membrane pass occupies residues 310 to 333 (GIVAGLAVLAVVVIGAVVAAVMCR). Residues 334-362 (RKSSGGKGGSYSQAACSDSAQGSDVSLTA) lie on the Cytoplasmic side of the membrane. The segment at 337–362 (SGGKGGSYSQAACSDSAQGSDVSLTA) is disordered. Over residues 346-362 (QAACSDSAQGSDVSLTA) the composition is skewed to polar residues.

As to quaternary structure, heterotrimer that consists of an alpha chain HLA-B, a beta chain B2M and a peptide (peptide-HLA-B-B2M). Early in biogenesis, HLA-B-B2M dimer interacts with the components of the peptide-loading complex composed of TAPBP, TAP1-TAP2, TAPBPL, PDIA3/ERP57 and CALR. Interacts with TAP1-TAP2 transporter via TAPBP; this interaction is obligatory for the loading of peptide epitopes delivered to the ER by TAP1-TAP2 transporter. Interacts with TAPBPL; TAPBPL binds peptide-free HLA-B-B2M complexes or those loaded with low affinity peptides, likely facilitating peptide exchange for higher affinity peptides. Only optimally assembled peptide-HLA-B-B2M trimer translocates to the surface of antigen-presenting cells, where it interacts with TCR and CD8 coreceptor on the surface of T cells. HLA-B (via polymorphic alpha-1 and alpha-2 domains) interacts with antigen-specific TCR (via CDR1, CDR2 and CDR3 domains). One HLA-B molecule (mainly via nonpolymorphic alpha-3 domain) interacts with one CD8A homodimer (via CDR-like loop); this interaction ensures peptide-HLA-B-B2M recognition by CD8-positive T cells only. Allele B*57:01 interacts (via Bw4 motif) with KIR3DL1 (via Ig-like C2-type domain); this interaction may interfere with peptide binding. Allele B*46:01 interacts with KIR2DL3. In terms of assembly, (Microbial infection) Interacts with HTLV-1 accessory protein p12I.

It localises to the cell membrane. The protein localises to the endoplasmic reticulum membrane. Functionally, antigen-presenting major histocompatibility complex class I (MHCI) molecule. In complex with B2M/beta 2 microglobulin displays primarily viral and tumor-derived peptides on antigen-presenting cells for recognition by alpha-beta T cell receptor (TCR) on HLA-B-restricted CD8-positive T cells, guiding antigen-specific T cell immune response to eliminate infected or transformed cells. May also present self-peptides derived from the signal sequence of secreted or membrane proteins, although T cells specific for these peptides are usually inactivated to prevent autoreactivity. Both the peptide and the MHC molecule are recognized by TCR, the peptide is responsible for the fine specificity of antigen recognition and MHC residues account for the MHC restriction of T cells. Typically presents intracellular peptide antigens of 8 to 13 amino acids that arise from cytosolic proteolysis via constitutive proteasome and IFNG-induced immunoproteasome. Can bind different peptides containing allele-specific binding motifs, which are mainly defined by anchor residues at position 2 and 9. Its function is as follows. Allele B*07:02: Displays peptides sharing a common signature motif, namely a Pro residue at position 2 and mainly a Leu anchor residue at the C-terminus. Presents a long peptide (APRGPHGGAASGL) derived from the cancer-testis antigen CTAG1A/NY-ESO-1, eliciting a polyclonal CD8-positive T cell response against tumor cells. Presents viral epitopes derived from HIV-1 gag-pol (TPQDLNTML) and Nef (RPQVPLRPM). Presents an immunodominant epitope derived from SARS-CoV-2 N/nucleoprotein (SPRWYFYYL). Displays self-peptides including a peptide derived from the signal sequence of HLA-DPB1 (APRTVALTA). In terms of biological role, allele B*08:01: Presents to CD8-positive T cells viral epitopes derived from EBV/HHV-4 EBNA3 (QAKWRLQTL), eliciting cytotoxic T cell response. Allele B*13:02: Presents multiple HIV-1 epitopes derived from gag (RQANFLGKI, GQMREPRGSDI), nef (RQDILDLWI), gag-pol (RQYDQILIE, GQGQWTYQI) and rev (LQLPPLERL), all having in common a Gln residue at position 2 and mainly hydrophobic amino acids Leu, Ile or Val at the C-terminus. Associated with successful control of HIV-1 infection. Functionally, allele B*18:01: Preferentially presents octomeric and nonameric peptides sharing a common motif, namely a Glu at position 2 and Phe or Tyr anchor residues at the C-terminus. Presents an EBV/HHV-4 epitope derived from BZLF1 (SELEIKRY). May present to CD8-positive T cells an antigenic peptide derived from MAGEA3 (MEVDPIGHLY), triggering an anti-tumor immune response. May display a broad repertoire of self-peptides with a preference for peptides derived from RNA-binding proteins. Its function is as follows. Allele B*27:05: Presents to CD8-positive T cells immunodominant viral epitopes derived from HCV POLG (ARMILMTHF), HIV-1 gag (KRWIILGLNK), IAV NP (SRYWAIRTR), SARS-CoV-2 N/nucleoprotein (QRNAPRITF), EBV/HHV-4 EBNA4 (HRCQAIRKK) and EBV/HHV-4 EBNA6 (RRIYDLIEL), conferring longterm protection against viral infection. Can present self-peptides derived from cytosolic and nuclear proteins. All peptides carry an Arg at position 2. The peptide-bound form interacts with NK cell inhibitory receptor KIR3DL1 and inhibits NK cell activation in a peptide-specific way, being particularly sensitive to the nature of the amino acid side chain at position 8 of the antigenic peptide. KIR3DL1 fails to recognize HLA-B*27:05 in complex with B2M and EBV/HHV-4 EBNA6 (RRIYDLIEL) peptide, which can lead to increased activation of NK cells during infection. May present an altered repertoire of peptides in the absence of TAP1-TAP2 and TAPBPL. In terms of biological role, allele B*40:01: Presents immunodominant viral epitopes derived from EBV/HHV-4 LMP2 (IEDPPFNSL) and SARS-CoV-2 N/nucleoprotein (MEVTPSGTWL), triggering memory CD8-positive T cell response. Displays self-peptides sharing a signature motif, namely a Glu at position 2 and a Leu anchor residue at the C-terminus. Allele B*41:01: Displays self-peptides sharing a signature motif, namely a Glu at position 2 and Ala or Pro anchor residues at the C-terminus. Functionally, allele B*44:02: Presents immunodominant viral epitopes derived from EBV/HHV-4 EBNA4 (VEITPYKPTW) and EBNA6 (AEGGVGWRHW, EENLLDFVRF), triggering memory CD8-positive T cell response. Displays self-peptides sharing a signature motif, namely a Glu at position 2 and Phe, Tyr or Trp anchor residues at the C-terminus. Its function is as follows. Allele B*45:01: Displays self-peptides sharing a signature motif, namely a Glu at position 2 and Ala or Pro anchor residues at the C-terminus. In terms of biological role, allele B*46:01: Preferentially presents nonameric peptides sharing a signature motif, namely Ala and Leu at position 2 and Tyr, Phe, Leu, or Met anchor residues at the C-terminus. The peptide-bound form interacts with KIR2DL3 and inhibits NK cell cytotoxic response in a peptide-specific way. Allele B*47:01: Displays self-peptides sharing a signature motif, namely an Asp at position 2 and Leu or Met anchor residues at the C-terminus. Functionally, allele B*49:01: Displays self-peptides sharing a signature motif, namely a Glu at position 2 and Ile or Val anchor residues at the C-terminus. Its function is as follows. Allele B*50:01: Displays self-peptides sharing a signature motif, namely a Glu at position 2 and Ala or Pro anchor residues at the C-terminus. In terms of biological role, allele B*51:01: Presents an octomeric HIV-1 epitope derived from gag-pol (TAFTIPSI) to the public TRAV17/TRBV7-3 TCR clonotype, strongly suppressing HIV-1 replication. Allele B*54:01: Displays peptides sharing a common signature motif, namely a Pro residue at position 2 and Ala anchor residue at the C-terminus. Functionally, allele B*55:01: Displays peptides sharing a common signature motif, namely a Pro residue at position 2 and Ala anchor residue at the C-terminus. Its function is as follows. Allele B*56:01: Displays peptides sharing a common signature motif, namely a Pro residue at position 2 and Ala anchor residue at the C-terminus. In terms of biological role, allele B*57:01: The peptide-bound form recognizes KIR3DL1 and inhibits NK cell cytotoxic response. Presents HIV gag peptides (immunodominant KAFSPEVIPMF and subdominant KALGPAATL epitopes) predominantly to CD8-positive T cell clones expressing a TRAV41-containing TCR, triggering HLA-B-restricted T cell responses. Allele B*67:01: Displays peptides sharing a common signature motif, namely a Pro residue at position 2 and Leu anchor residue at the C-terminus. The sequence is that of HLA class I histocompatibility antigen, B alpha chain from Homo sapiens (Human).